The primary structure comprises 425 residues: E3 ubiquitin-protein ligase TRIM31 (425 aa).

Residues 16-57 (CPICLDILQKPVTIDCGHNFCLKCITQIGETSCGFFKCPLCK) form an RING-type zinc finger. The segment at 90–131 (RKEATCPRHQEMFHYFCEDDGKFLCFVCRESKDHKSHNVSLI) adopts a B box-type zinc-finger fold. Positions 95, 98, 117, and 123 each coordinate Zn(2+). Coiled-coil stretches lie at residues 126–162 (HNVS…VKAQ) and 270–307 (LELE…DENR). Residues 328–360 (HKMNKTSEPGSSSAGGRTTSGPPNHHSSAPSHS) form a disordered region. Low complexity predominate over residues 336–360 (PGSSSAGGRTTSGPPNHHSSAPSHS).

This sequence belongs to the TRIM/RBCC family. In terms of assembly, may form oligomers. Interacts with isoform p52shc of SHC1. In terms of processing, auto-ubiquitinated (in vitro). In terms of tissue distribution, up-regulated in gastric adenocarcinomas.

The protein localises to the cytoplasm. It is found in the mitochondrion. The enzyme catalyses S-ubiquitinyl-[E2 ubiquitin-conjugating enzyme]-L-cysteine + [acceptor protein]-L-lysine = [E2 ubiquitin-conjugating enzyme]-L-cysteine + N(6)-ubiquitinyl-[acceptor protein]-L-lysine.. Its pathway is protein modification; protein ubiquitination. E3 ubiquitin-protein ligase that acts as a regulator of antiviral immune response and inflammation by mediating ubiquitination of substrates. Acts as a regulator of innate immune defense against viruses by mediating 'Lys-63'-linked ubiquitination of MAVS, promoting MAVS polymerization and formation of three-stranded helical filaments on mitochondria. Acts as a negative regulator of the NLRP3 inflammasome by catalyzing 'Lys-48'-linked ubiquitination of NLRP3, leading to its degradation. Regulator of Src-induced anchorage independent cell growth. In Homo sapiens (Human), this protein is E3 ubiquitin-protein ligase TRIM31.